Here is a 74-residue protein sequence, read N- to C-terminus: ATP synthase subunit 9, mitochondrial (74 aa).

Transmembrane regions (helical) follow at residues 16 to 36 and 50 to 70; these read GLIG…IGVS and ILGF…AFLL.

Belongs to the ATPase C chain family. F-type ATPases have 2 components, CF(1) - the catalytic core - and CF(0) - the membrane proton channel. CF(1) has five subunits: alpha(3), beta(3), gamma(1), delta(1), epsilon(1). CF(0) has three main subunits: a, b and c.

It is found in the mitochondrion inner membrane. In terms of biological role, mitochondrial membrane ATP synthase (F(1)F(0) ATP synthase or Complex V) produces ATP from ADP in the presence of a proton gradient across the membrane which is generated by electron transport complexes of the respiratory chain. F-type ATPases consist of two structural domains, F(1) - containing the extramembraneous catalytic core and F(0) - containing the membrane proton channel, linked together by a central stalk and a peripheral stalk. During catalysis, ATP synthesis in the catalytic domain of F(1) is coupled via a rotary mechanism of the central stalk subunits to proton translocation. Part of the complex F(0) domain. A homomeric c-ring of probably 10 subunits is part of the complex rotary element. This is ATP synthase subunit 9, mitochondrial (atp-9) from Neurospora crassa (strain ATCC 24698 / 74-OR23-1A / CBS 708.71 / DSM 1257 / FGSC 987).